The chain runs to 496 residues: Aspartyl/glutamyl-tRNA(Asn/Gln) amidotransferase subunit B (496 aa).

The protein belongs to the GatB/GatE family. GatB subfamily. As to quaternary structure, heterotrimer of A, B and C subunits.

It carries out the reaction L-glutamyl-tRNA(Gln) + L-glutamine + ATP + H2O = L-glutaminyl-tRNA(Gln) + L-glutamate + ADP + phosphate + H(+). The enzyme catalyses L-aspartyl-tRNA(Asn) + L-glutamine + ATP + H2O = L-asparaginyl-tRNA(Asn) + L-glutamate + ADP + phosphate + 2 H(+). Allows the formation of correctly charged Asn-tRNA(Asn) or Gln-tRNA(Gln) through the transamidation of misacylated Asp-tRNA(Asn) or Glu-tRNA(Gln) in organisms which lack either or both of asparaginyl-tRNA or glutaminyl-tRNA synthetases. The reaction takes place in the presence of glutamine and ATP through an activated phospho-Asp-tRNA(Asn) or phospho-Glu-tRNA(Gln). The chain is Aspartyl/glutamyl-tRNA(Asn/Gln) amidotransferase subunit B from Prochlorococcus marinus (strain MIT 9303).